Consider the following 201-residue polypeptide: Methylated-DNA--protein-cysteine methyltransferase (201 aa).

Positions 131, 132, and 146 each coordinate DNA. C163 (nucleophile; methyl group acceptor) is an active-site residue.

This sequence belongs to the MGMT family.

The protein localises to the nucleus. It carries out the reaction a 6-O-methyl-2'-deoxyguanosine in DNA + L-cysteinyl-[protein] = S-methyl-L-cysteinyl-[protein] + a 2'-deoxyguanosine in DNA. The enzyme catalyses a 4-O-methyl-thymidine in DNA + L-cysteinyl-[protein] = a thymidine in DNA + S-methyl-L-cysteinyl-[protein]. In terms of biological role, involved in the cellular defense against the biological effects of O6-methylguanine (O6-MeG) and O4-methylthymine (O4-MeT) in DNA. Repairs the methylated nucleobase in DNA by stoichiometrically transferring the methyl group to a cysteine residue in the enzyme. This is a suicide reaction: the enzyme is irreversibly inactivated. The protein is Methylated-DNA--protein-cysteine methyltransferase (MGT1) of Lodderomyces elongisporus (strain ATCC 11503 / CBS 2605 / JCM 1781 / NBRC 1676 / NRRL YB-4239) (Yeast).